We begin with the raw amino-acid sequence, 146 residues long: DNA-binding protein Rv2175c (146 aa).

Residues 1-27 are disordered; it reads MPGRAPGSTLARVGSIPAGDDVLDPDE. Position 9 is a phosphothreonine (Thr9).

As to quaternary structure, monomer in solution. May form homodimers. Interacts with phosphorylated PknL. In terms of processing, phosphorylated by PknL. Phosphorylation negatively regulates DNA-binding activity.

Its function is as follows. Binds DNA at low salt concentrations. The polypeptide is DNA-binding protein Rv2175c (Mycobacterium tuberculosis (strain ATCC 25618 / H37Rv)).